Reading from the N-terminus, the 576-residue chain is TRAF-type zinc finger domain-containing protein 1 (576 aa).

Position 2 is an N-acetylalanine (A2). The TRAF-type zinc finger occupies 27–103; sequence IHEIHCQRNI…DLELSVVKLK (77 aa). Phosphoserine is present on residues S278, S320, S326, S327, S409, S415, S430, and S450. Positions 402–432 are disordered; that stretch reads EGIPTQDSQPEDRSPELSRRRVKHQGDLSSG. The span at 411 to 420 shows a compositional bias: basic and acidic residues; that stretch reads PEDRSPELSR. Disordered regions lie at residues 465–491 and 529–576; these read LNSSGPRSDCQRSPPGVLKLNNSGSQD and HGSP…EEEE. S531 carries the phosphoserine modification. Polar residues predominate over residues 540-552; the sequence is GSRSSRVTPTAAS.

As to quaternary structure, interacts with MAVS, TICAM1, TRAF1, TRAF2, TRAF3 and TRAF6. As to expression, expressed in vascular smooth muscle cells.

Its function is as follows. Negative feedback regulator that controls excessive innate immune responses. Regulates both Toll-like receptor 4 (TLR4) and DDX58/RIG1-like helicases (RLH) pathways. May inhibit the LTR pathway by direct interaction with TRAF6 and attenuation of NF-kappa-B activation. May negatively regulate the RLH pathway downstream from MAVS and upstream of NF-kappa-B and IRF3. In Rattus norvegicus (Rat), this protein is TRAF-type zinc finger domain-containing protein 1 (Trafd1).